The following is a 73-amino-acid chain: Large ribosomal subunit protein bL31 (73 aa).

Zn(2+) is bound by residues C16, C18, C36, and C39.

This sequence belongs to the bacterial ribosomal protein bL31 family. Type A subfamily. In terms of assembly, part of the 50S ribosomal subunit. The cofactor is Zn(2+).

Binds the 23S rRNA. The polypeptide is Large ribosomal subunit protein bL31 (Citrifermentans bemidjiense (strain ATCC BAA-1014 / DSM 16622 / JCM 12645 / Bem) (Geobacter bemidjiensis)).